The chain runs to 241 residues: Polycomb group RING finger protein 3 (241 aa).

The segment at 17-56 (CRLCSGYLIDATTVTECLHTFCRSCLVKYLEENNTCPTCR) adopts an RING-type zinc-finger fold. Residues 115-148 (AKQHLDPRNGETKADDNSNKETAEEKQEEDNDYH) are disordered. A compositionally biased stretch (basic and acidic residues) spans 117 to 139 (QHLDPRNGETKADDNSNKETAEE). An interaction with BCORL1 region spans residues 131 to 241 (NSNKETAEEK…LHYRPKMDLL (111 aa)).

In terms of assembly, component of a PRC1-like complex that contains PCGF3, RNF2 and RYBP. Interacts with RNF2. Interacts with CBX6, CBX7 and CBX8. Interacts with BCORL1.

The protein resides in the nucleus. It localises to the nucleoplasm. Functionally, component of a Polycomb group (PcG) multiprotein PRC1-like complex, a complex class required to maintain the transcriptionally repressive state of many genes, including Hox genes, throughout development. PcG PRC1 complex acts via chromatin remodeling and modification of histones; it mediates monoubiquitination of histone H2A 'Lys-119', rendering chromatin heritably changed in its expressibility. Within the PRC1-like complex, regulates RNF2 ubiquitin ligase activity. Plays a redundant role with PCGF5 as part of a PRC1-like complex that mediates monoubiquitination of histone H2A 'Lys-119' on the X chromosome and is required for normal silencing of one copy of the X chromosome in XX females. The chain is Polycomb group RING finger protein 3 (PcgF3) from Mus musculus (Mouse).